Here is a 342-residue protein sequence, read N- to C-terminus: tRNA-dihydrouridine(20/20a) synthase (342 aa).

Residues 10 to 12 (PMV) and Gln-63 contribute to the FMN site. The active-site Proton donor is Cys-93. Residues Lys-132, His-164, 203–205 (NGG), and 225–226 (GR) contribute to the FMN site. A compositionally biased stretch (basic and acidic residues) spans 313–331 (EEEVGEEGEKEKPGPRGQR). The disordered stretch occupies residues 313–342 (EEEVGEEGEKEKPGPRGQREAAPGPAREGV).

It belongs to the Dus family. DusA subfamily. Requires FMN as cofactor.

The catalysed reaction is 5,6-dihydrouridine(20) in tRNA + NADP(+) = uridine(20) in tRNA + NADPH + H(+). The enzyme catalyses 5,6-dihydrouridine(20) in tRNA + NAD(+) = uridine(20) in tRNA + NADH + H(+). It carries out the reaction 5,6-dihydrouridine(20a) in tRNA + NADP(+) = uridine(20a) in tRNA + NADPH + H(+). It catalyses the reaction 5,6-dihydrouridine(20a) in tRNA + NAD(+) = uridine(20a) in tRNA + NADH + H(+). Functionally, catalyzes the synthesis of 5,6-dihydrouridine (D), a modified base found in the D-loop of most tRNAs, via the reduction of the C5-C6 double bond in target uridines. Specifically modifies U20 and U20a in tRNAs. The protein is tRNA-dihydrouridine(20/20a) synthase (dus) of Thermus thermophilus (strain ATCC 27634 / DSM 579 / HB8).